A 373-amino-acid polypeptide reads, in one-letter code: Spermidine/putrescine import ATP-binding protein PotA (373 aa).

The ABC transporter domain occupies 5-235 (IVFEHVSKKF…PKSSFVADFI (231 aa)). Position 37 to 44 (37 to 44 (GPSGCGKT)) interacts with ATP.

Belongs to the ABC transporter superfamily. Spermidine/putrescine importer (TC 3.A.1.11.1) family. In terms of assembly, the complex is composed of two ATP-binding proteins (PotA), two transmembrane proteins (PotB and PotC) and a solute-binding protein (PotD).

The protein resides in the cell inner membrane. It carries out the reaction ATP + H2O + polyamine-[polyamine-binding protein]Side 1 = ADP + phosphate + polyamineSide 2 + [polyamine-binding protein]Side 1.. In terms of biological role, part of the ABC transporter complex PotABCD involved in spermidine/putrescine import. Responsible for energy coupling to the transport system. The chain is Spermidine/putrescine import ATP-binding protein PotA from Protochlamydia amoebophila (strain UWE25).